We begin with the raw amino-acid sequence, 704 residues long: Polyribonucleotide nucleotidyltransferase (704 aa).

Positions 488 and 494 each coordinate Mg(2+). Residues 555 to 614 (PRITTIKINPEKIRDVIGKGGATIRALTEETGTTIELDDDGTVKIASSNGEATKEAIRRI) form the KH domain. In terms of domain architecture, S1 motif spans 624–692 (GTVYNGKVVR…RQGRVRLSMK (69 aa)).

The protein belongs to the polyribonucleotide nucleotidyltransferase family. As to quaternary structure, component of the RNA degradosome, which is a multiprotein complex involved in RNA processing and mRNA degradation. It depends on Mg(2+) as a cofactor.

Its subcellular location is the cytoplasm. The enzyme catalyses RNA(n+1) + phosphate = RNA(n) + a ribonucleoside 5'-diphosphate. Its function is as follows. Involved in mRNA degradation. Catalyzes the phosphorolysis of single-stranded polyribonucleotides processively in the 3'- to 5'-direction. The polypeptide is Polyribonucleotide nucleotidyltransferase (Shewanella halifaxensis (strain HAW-EB4)).